The primary structure comprises 73 residues: Large ribosomal subunit protein bL31 (73 aa).

The protein belongs to the bacterial ribosomal protein bL31 family. Type A subfamily. In terms of assembly, part of the 50S ribosomal subunit.

Functionally, binds the 23S rRNA. This is Large ribosomal subunit protein bL31 from Brucella abortus (strain 2308).